Reading from the N-terminus, the 625-residue chain is Clathrin interactor 1 (625 aa).

Residues 16–149 (NVVMNYSEIE…QDDDRLREER (134 aa)) form the ENTH domain. Arginine 29 is a binding site for a 1,2-diacyl-sn-glycero-3-phospho-(1D-myo-inositol-4,5-bisphosphate). Residues 52-54 (FMY) are interaction with VTI1B. Arginine 67 provides a ligand contact to a 1,2-diacyl-sn-glycero-3-phospho-(1D-myo-inositol-4,5-bisphosphate). Interaction with VTI1B stretches follow at residues 94–96 (SER) and 142–153 (DDRLREERKKAK). Phosphoserine occurs at positions 163, 166, 173, 205, 210, 227, 245, and 299. Positions 219–331 (FRRKDREDSP…SSGDLVDLFD (113 aa)) are disordered. Over residues 222–239 (KDREDSPERCSDSDEEKK) the composition is skewed to basic and acidic residues. Position 308 is a phosphothreonine (threonine 308). Residues 308-323 (TPQSSVKTSVPSSKSS) are compositionally biased toward low complexity. Position 312 is a phosphoserine (serine 312). The interval 340–352 (SADLFGGFADFGS) is interaction with AP1G1, AP1G2 and GGA2. Positions 368 to 380 (GNGDFGDWSAFNQ) are interaction with AP1G1 and AP1G2. Position 624 is a phosphoserine (serine 624).

It belongs to the epsin family. In terms of assembly, binds clathrin heavy chain and AP-2. Interacts with VTI1B. Interacts with GGA2 (via GAE domain). Interacts with AP1G1 (via GAE domain). Interacts with AP1G2 (via GAE domain). As to expression, ubiquitously expressed at low to intermediate levels.

It localises to the cytoplasm. The protein localises to the perinuclear region. It is found in the membrane. The protein resides in the cytoplasmic vesicle. Its subcellular location is the clathrin-coated vesicle. In terms of biological role, binds to membranes enriched in phosphatidylinositol 4,5-bisphosphate (PtdIns(4,5)P2). May have a role in transport via clathrin-coated vesicles from the trans-Golgi network to endosomes. Stimulates clathrin assembly. In Homo sapiens (Human), this protein is Clathrin interactor 1 (CLINT1).